A 1499-amino-acid polypeptide reads, in one-letter code: Ubiquitinating/deubiquitinating enzyme SdeA (1499 aa).

Positions 1–193 (MPKYVEGVEL…GKALRENTEK (193 aa)) are deubiquitinase. Residues histidine 64 and aspartate 80 each act as for deubiquitinase activity in the active site. Cysteine 118 (nucleophile; for deubiquitinase activity) is an active-site residue. Residues 760-1000 (PPTRLFRGLN…KALAAFPSDT (241 aa)) are mono-ADP-ribosyltransferase. NAD(+) is bound at residue 766–772 (RGLNLSE). Glutamate 860 bears the 5-glutamyl glutamate mark. Glutamate 862 is a binding site for NAD(+). A coiled-coil region spans residues 1059–1181 (KEMGTIRREL…IDTKLADAYL (123 aa)).

The protein belongs to the SidE family. As to quaternary structure, interacts with IcmS. In terms of processing, is able to ubiquitinate itself, but this modification is not required to ubiquitinate Rab33b. Post-translationally, glutamylated at Glu-860 by SidJ; glutamylation inhibits SdeA activity to catalyze the production of ADP-ribosylated ubiquitin.

It localises to the secreted. The protein resides in the host cell. The enzyme catalyses L-arginyl-[protein] + NAD(+) = N(omega)-(ADP-D-ribosyl)-L-arginyl-[protein] + nicotinamide + H(+). Ubiquitination catalyzed by SdeA is insensitive to the cysteine alkylation agent maleimide, suggesting that a cysteine conjugation of ubiquitin does not form during the reaction. Functionally, secreted effector that interferes with the host cell ubiquitin pathway and is required for intracellular bacterial replication. Catalyzes the ubiquitination of several mammalian Rab proteins (Rab33b, Rab1, Rab6a and Rab30) during L.pneumophila infection, without engaging the standard cellular enzyme cascade (E1 and E2). Transfers an ADP-ribose moiety from NAD to the 'Arg-42' residue of ubiquitin in a reaction that releases nicotinamide. The modified ubiquitin is subsequently transferred to serine residues of the substrate protein via a phosphoribose linker that results in the release of AMP. Cannot ubiquitinate the endosomal Rab5 or the cytoskeletal small GTPase Rac1. Also acts as a deubiquitinase (DUB), catalyzing the cleavage of three of the most abundant polyubiquitin chains ('Lys-11', 'Lys-48' and 'Lys-63') with a distinct preference for 'Lys-63' linkages; is thus able to efficiently remove 'Lys-63'-linked polyubiquitin chains from the phagosomal surface. Is also able to remove NEDD8 from neddylated proteins, but is unable to recognize SUMO. The DUB activity of SdeA is important for regulating the dynamics of ubiquitin association with the bacterial phagosome, but is dispensable for its role in intracellular bacterial replication. This is Ubiquitinating/deubiquitinating enzyme SdeA from Legionella pneumophila subsp. pneumophila (strain Philadelphia 1 / ATCC 33152 / DSM 7513).